The following is a 309-amino-acid chain: Ribosomal RNA small subunit methyltransferase H (309 aa).

Residues 33–35 (GGH), aspartate 53, phenylalanine 79, aspartate 100, and glutamine 107 contribute to the S-adenosyl-L-methionine site.

This sequence belongs to the methyltransferase superfamily. RsmH family.

It is found in the cytoplasm. The catalysed reaction is cytidine(1402) in 16S rRNA + S-adenosyl-L-methionine = N(4)-methylcytidine(1402) in 16S rRNA + S-adenosyl-L-homocysteine + H(+). Its function is as follows. Specifically methylates the N4 position of cytidine in position 1402 (C1402) of 16S rRNA. The chain is Ribosomal RNA small subunit methyltransferase H from Clostridium botulinum (strain ATCC 19397 / Type A).